A 487-amino-acid chain; its full sequence is MTLLHQLTLSDAREALMRGEITSVELTDALLARIAAVEPQVRAFLTIDAEGARAQAQAADARRAAGDTSPLLGIPLGIKDVISTQGVRTTCASKMLENYVPVYDATAVARLKAAGAVLIGKLNCDEFAMGSSTENSAFQQTRNPWNLERVPGGSSGGSAAAVAAGEAPATLGTDTGGSIRQPAALCGITGLKPTYGRVSRYGLVAFASSLDQIGPMARTVRDCAIILRVIAGADPFDATCTDHPVPDYEAALTGDIRGLRIGVPREYFVAGMQPEVESAVRVAIDVLRDQGAEVREISLPHTPYALPVYYLIAPAEASANLARFDGVRYGLRVPGESYFDELERTRGAGFGPEVRRRIMLGTYALSAGYYDAYYKRAQQVRTLIRRDYQQAFEQVDVIAAPTTPTVAFPIGAHSDDPLAMYLEDVCTLPLNLAGLPGLVVPCGFAAGLPIGLQLIGRAFDEETLLRIGDAYQRVTDWHTRMPDLPVE.

Active-site charge relay system residues include K79 and S154. S178 serves as the catalytic Acyl-ester intermediate.

This sequence belongs to the amidase family. GatA subfamily. As to quaternary structure, heterotrimer of A, B and C subunits.

The catalysed reaction is L-glutamyl-tRNA(Gln) + L-glutamine + ATP + H2O = L-glutaminyl-tRNA(Gln) + L-glutamate + ADP + phosphate + H(+). In terms of biological role, allows the formation of correctly charged Gln-tRNA(Gln) through the transamidation of misacylated Glu-tRNA(Gln) in organisms which lack glutaminyl-tRNA synthetase. The reaction takes place in the presence of glutamine and ATP through an activated gamma-phospho-Glu-tRNA(Gln). The sequence is that of Glutamyl-tRNA(Gln) amidotransferase subunit A from Roseiflexus sp. (strain RS-1).